Here is a 121-residue protein sequence, read N- to C-terminus: uncharacterized protein (121 aa).

This is an uncharacterized protein from Escherichia coli (strain K12).